The sequence spans 24 residues: Pseudin-2 (24 aa).

As to expression, expressed by the skin glands.

It localises to the secreted. Functionally, antimicrobial peptide with activity against fungus (C.albicans) and Gram-positive and Gram-negative bacteria (S.aureus and E.coli). Also has low hemolytic activity against human erythrocytes. This chain is Pseudin-2, found in Pseudis paradoxa (Paradoxical frog).